We begin with the raw amino-acid sequence, 602 residues long: Aspartate--tRNA(Asp/Asn) ligase (602 aa).

Glutamate 175 contacts L-aspartate. Residues 199–202 (QIFK) are aspartate. Arginine 221 serves as a coordination point for L-aspartate. ATP contacts are provided by residues 221 to 223 (RDE) and glutamine 230. Position 458 (histidine 458) interacts with L-aspartate. Glutamate 492 is a binding site for ATP. Arginine 499 contributes to the L-aspartate binding site. ATP is bound at residue 544-547 (GLDR).

Belongs to the class-II aminoacyl-tRNA synthetase family. Type 1 subfamily. In terms of assembly, homodimer.

It localises to the cytoplasm. The enzyme catalyses tRNA(Asx) + L-aspartate + ATP = L-aspartyl-tRNA(Asx) + AMP + diphosphate. Its function is as follows. Aspartyl-tRNA synthetase with relaxed tRNA specificity since it is able to aspartylate not only its cognate tRNA(Asp) but also tRNA(Asn). Reaction proceeds in two steps: L-aspartate is first activated by ATP to form Asp-AMP and then transferred to the acceptor end of tRNA(Asp/Asn). This Cupriavidus taiwanensis (strain DSM 17343 / BCRC 17206 / CCUG 44338 / CIP 107171 / LMG 19424 / R1) (Ralstonia taiwanensis (strain LMG 19424)) protein is Aspartate--tRNA(Asp/Asn) ligase.